Here is a 122-residue protein sequence, read N- to C-terminus: Large ribosomal subunit protein uL14 (122 aa).

This sequence belongs to the universal ribosomal protein uL14 family. In terms of assembly, part of the 50S ribosomal subunit. Forms a cluster with proteins L3 and L19. In the 70S ribosome, L14 and L19 interact and together make contacts with the 16S rRNA in bridges B5 and B8.

Binds to 23S rRNA. Forms part of two intersubunit bridges in the 70S ribosome. The polypeptide is Large ribosomal subunit protein uL14 (Dehalococcoides mccartyi (strain ATCC BAA-2266 / KCTC 15142 / 195) (Dehalococcoides ethenogenes (strain 195))).